A 125-amino-acid polypeptide reads, in one-letter code: SNRPMPLNIKQFNNMIQCTVPARSWWDFADYGCYCGSGSGSPVDDLDRCCQVHDNCYNAGGGVTGCAPKSKTYTYECSQGTLTCSGENSACAATVCDCDRLAAICFAGAPYNDNNYNIDLKSRCQ.

S1 is a signal peptide. Residues 2 to 7 constitute a propeptide that is removed on maturation; it reads NRPMPL. Cystine bridges form between C18–C77, C33–C124, C35–C50, C49–C105, C56–C98, C66–C91, and C84–C96. D30 contributes to the Zn(2+) binding site. Ca(2+) is bound by residues Y34 and G36. H53 is an active-site residue. D54 lines the Ca(2+) pocket. D99 is an active-site residue.

As to quaternary structure, heterodimer formed between isoform 5 and isoform 6 in presence of zinc ion and monomer in absence of zinc ion. Ca(2+) serves as cofactor. Expressed by the venom gland.

The protein localises to the secreted. The catalysed reaction is a 1,2-diacyl-sn-glycero-3-phosphocholine + H2O = a 1-acyl-sn-glycero-3-phosphocholine + a fatty acid + H(+). Its function is as follows. PLA2 catalyzes the calcium-dependent hydrolysis of the 2-acyl groups in 3-sn-phosphoglycerides. In Naja sagittifera (Andaman cobra), this protein is Acidic phospholipase A2 6.